The chain runs to 605 residues: Glutamine--fructose-6-phosphate aminotransferase [isomerizing] (605 aa).

Cysteine 2 acts as the Nucleophile; for GATase activity in catalysis. One can recognise a Glutamine amidotransferase type-2 domain in the interval 2–216 (CGIVGIVGHQ…DGDWAVIGKT (215 aa)). SIS domains are found at residues 280 to 420 (DSDA…ARGT) and 454 to 595 (LSRE…VDQP). Lysine 600 acts as the For Fru-6P isomerization activity in catalysis.

It is found in the cytoplasm. It carries out the reaction D-fructose 6-phosphate + L-glutamine = D-glucosamine 6-phosphate + L-glutamate. In terms of biological role, involved in the production of the root hair deformation (HAD) factor specifically on medicago. This Rhizobium meliloti (Ensifer meliloti) protein is Glutamine--fructose-6-phosphate aminotransferase [isomerizing] (nodM).